The following is a 306-amino-acid chain: Cathepsin Z (306 aa).

The N-terminal stretch at 1 to 20 is a signal peptide; the sequence is MLAILFNFFLLTYFTNITLG. The propeptide at 21–65 is activation peptide; the sequence is KVGKSIDLDTRNGYNVHGCYKQTGKIYAHKTYPRQYEAENYNFDD. 5 disulfides stabilise this stretch: C39-C96, C93-C136, C130-C168, C158-C174, and C177-C182. Residue C96 is part of the active site. N-linked (GlcNAc...) asparagine glycosylation occurs at N187. C217 and C299 are joined by a disulfide. Residues H243 and N265 contribute to the active site. A glycan (N-linked (GlcNAc...) asparagine) is linked at N286.

This sequence belongs to the peptidase C1 family.

It localises to the cytoplasmic vesicle. It is found in the secretory vesicle. The protein localises to the secreted. It carries out the reaction Release of C-terminal amino acid residues with broad specificity, but lacks action on C-terminal proline. Shows weak endopeptidase activity.. The disulfide bridge formed between Cys-39 in the propeptide and the active site residue Cys-96 may prevent activation of the zymogen through formation of a reversible covalent bond with the active site residue. Its function is as follows. Exhibits carboxy-monopeptidase as well as carboxy-dipeptidase activity. Plays an essential role in molting, a process during larval stages in which a new cuticle is formed and the old cuticle is shed. Required for the degradation and shedding of the old cuticle. This is Cathepsin Z from Onchocerca volvulus.